A 1062-amino-acid polypeptide reads, in one-letter code: Translation initiation factor IF-2 (1062 aa).

A disordered region spans residues 34–463; it reads SASSTVEAPV…RMGAMVPRGN (430 aa). The span at 76-121 shows a compositional bias: pro residues; the sequence is PTPPSRPGLAPRPGPRPVPGRPGPLGRPGPATPAPSPSPASPPLPA. A compositionally biased stretch (low complexity) spans 122 to 153; that stretch reads SPVQASPVQASPVQASPTSAPAAPRPAAASAV. A compositionally biased stretch (pro residues) spans 154–178; it reads PAPPMPSVPSAPSGPRPGPNAPRPG. The span at 198-214 shows a compositional bias: gly residues; it reads TAGGPTAGGPTAGGPTA. Residues 294-305 show a composition bias toward pro residues; the sequence is RPTPGGMPPRPG. Gly residues-rich tracts occupy residues 307–324 and 344–430; these read PRSGAGGGMPPRPGGTGG and PGGG…GGRG. Over residues 431–442 the composition is skewed to basic residues; it reads RPGRQRKSKRAK. The 173-residue stretch at 555 to 727 folds into the tr-type G domain; it reads SRPPVVTVMG…IVLTADASLD (173 aa). Residues 564–571 are G1; that stretch reads GHVDHGKT. 564-571 contacts GTP; that stretch reads GHVDHGKT. A G2 region spans residues 589–593; it reads GITQH. The tract at residues 614-617 is G3; it reads DTPG. GTP-binding positions include 614 to 618 and 668 to 671; these read DTPGH and NKVD. The G4 stretch occupies residues 668 to 671; sequence NKVD. The segment at 704-706 is G5; that stretch reads SAR.

Belongs to the TRAFAC class translation factor GTPase superfamily. Classic translation factor GTPase family. IF-2 subfamily.

The protein localises to the cytoplasm. In terms of biological role, one of the essential components for the initiation of protein synthesis. Protects formylmethionyl-tRNA from spontaneous hydrolysis and promotes its binding to the 30S ribosomal subunits. Also involved in the hydrolysis of GTP during the formation of the 70S ribosomal complex. In Frankia casuarinae (strain DSM 45818 / CECT 9043 / HFP020203 / CcI3), this protein is Translation initiation factor IF-2.